The primary structure comprises 555 residues: CD166 antigen homolog (555 aa).

The first 22 residues, 1-22, serve as a signal peptide directing secretion; the sequence is MQSVVCLIGAFIAAAVFRPGSC. 2 consecutive Ig-like V-type domains span residues 23-127 and 131-229; these read VGTV…EVKV and PSAP…DQVS. Residues 23–499 are Extracellular-facing; sequence VGTVIGLYGE…NEDGTEQAKV (477 aa). Intrachain disulfides connect C38–C110, C154–C217, and C263–C306. 2 N-linked (GlcNAc...) asparagine glycosylation sites follow: N92 and N171. 3 consecutive Ig-like C2-type domains span residues 239 to 323, 319 to 397, and 406 to 484; these read PTEK…VTVS, FVTV…RSLS, and PKIT…KEIS. N-linked (GlcNAc...) asparagine glycans are attached at residues N350, N441, and N465. A disulfide bridge links C426 with C470. A helical membrane pass occupies residues 500–520; it reads IVGIVVGLLVAAALVGLIYWI. Residues 521 to 555 are Cytoplasmic-facing; the sequence is YIKKTRQGSWKTGEKEAGTSEESKKLEENNHKPDV. Residues 529–555 are disordered; that stretch reads SWKTGEKEAGTSEESKKLEENNHKPDV. Basic and acidic residues predominate over residues 532-555; the sequence is TGEKEAGTSEESKKLEENNHKPDV.

As to quaternary structure, homodimer. Interacts (via extracellular domain) with CD6 (via extracellular domain). Homodimerization and interaction with CD6 involve the same region and cannot occur simultaneously. The affinity for CD6 is much higher than the affinity for self-association. Present on all retinal ganglion cells (RGCS) and their axons (in embryo). Absent from mature axons along most of their length, but is present on new and growing axons derived from the RGCS at the retinal margin. Remains on adult RGCS only at cell-cell contact sites and is continuously found in the retinal axon terminal arbor layers of the adult tectum.

The protein resides in the cell membrane. It is found in the cell projection. The protein localises to the axon. It localises to the dendrite. In terms of biological role, cell adhesion molecule that mediates both heterotypic cell-cell contacts via its interaction with CD6, as well as homotypic cell-cell contacts. Promotes T-cell activation and proliferation via its interactions with CD6. Contributes to the formation and maturation of the immunological synapse via its interactions with CD6. Mediates homotypic interactions with cells that express ALCAM. Mediates attachment of dendritic cells onto endothelial cells via homotypic interaction. Inhibits endothelial cell migration and promotes endothelial tube formation via homotypic interactions. Required for normal organization of the lymph vessel network. Required for normal hematopoietic stem cell engraftment in the bone marrow. Plays a role in hematopoiesis; required for normal numbers of hematopoietic stem cells in bone marrow. Promotes in vitro osteoblast proliferation and differentiation. Promotes neurite extension, axon growth and axon guidance; axons grow preferentially on surfaces that contain ALCAM. Mediates outgrowth and pathfinding for retinal ganglion cell axons. The polypeptide is CD166 antigen homolog (alcam) (Carassius auratus (Goldfish)).